A 284-amino-acid polypeptide reads, in one-letter code: Chaperone protein dnaJ 6 (284 aa).

Disordered stretches follow at residues Met-1–Leu-30, Asn-196–Ser-221, and Gly-252–Lys-284. The short motif at Arg-3–Lys-6 is the Nuclear localization signal element. In terms of domain architecture, J spans Ser-29–Gly-94. The Nuclear localization signal signature appears at Arg-209–Lys-215. Residues Ala-255–Glu-265 are compositionally biased toward acidic residues. Over residues Ala-266–Arg-275 the composition is skewed to basic and acidic residues.

The protein belongs to the DnaJ family. C/III subfamily. Highly expressed in leaves, flowers and siliques, and to lower extent in roots.

The protein localises to the nucleus. Plays a continuous role in plant development probably in the structural organization of compartments. The chain is Chaperone protein dnaJ 6 (ATJ6) from Arabidopsis thaliana (Mouse-ear cress).